The following is a 208-amino-acid chain: MTGKKRSASSSRWLQEHFSDKYVQQAQKKGLRSRAWFKLDEIQQSDKLFKPGMTVVDLGAAPGGWSQYVVTQIGGKGRIIACDLLPMDPIVGVDFLQGDFRDELVMKALLERVGDSKVQVVMSDMAPNMSGTPAVDIPRAMYLVELALEMCRDVLAPGGSFVVKVFQGEGFDEYLREIRSLFTKVKIRKPDSSRARSREVYIVATGRK.

S-adenosyl-L-methionine contacts are provided by glycine 63, tryptophan 65, aspartate 83, aspartate 99, and aspartate 124. The active-site Proton acceptor is lysine 164.

Belongs to the class I-like SAM-binding methyltransferase superfamily. RNA methyltransferase RlmE family.

It is found in the cytoplasm. The catalysed reaction is uridine(2552) in 23S rRNA + S-adenosyl-L-methionine = 2'-O-methyluridine(2552) in 23S rRNA + S-adenosyl-L-homocysteine + H(+). Its function is as follows. Specifically methylates the uridine in position 2552 of 23S rRNA at the 2'-O position of the ribose in the fully assembled 50S ribosomal subunit. This Salmonella paratyphi A (strain ATCC 9150 / SARB42) protein is Ribosomal RNA large subunit methyltransferase E.